Here is a 168-residue protein sequence, read N- to C-terminus: tRNA-splicing endonuclease (168 aa).

Catalysis depends on residues tyrosine 107, histidine 114, and lysine 145.

It belongs to the tRNA-intron endonuclease family. Archaeal short subfamily. In terms of assembly, homotetramer; although the tetramer contains four active sites, only two participate in the cleavage. Therefore, it should be considered as a dimer of dimers.

It carries out the reaction pretRNA = a 3'-half-tRNA molecule with a 5'-OH end + a 5'-half-tRNA molecule with a 2',3'-cyclic phosphate end + an intron with a 2',3'-cyclic phosphate and a 5'-hydroxyl terminus.. In terms of biological role, endonuclease that removes tRNA introns. Cleaves pre-tRNA at the 5'- and 3'-splice sites to release the intron. The products are an intron and two tRNA half-molecules bearing 2',3' cyclic phosphate and 5'-OH termini. Recognizes a pseudosymmetric substrate in which 2 bulged loops of 3 bases are separated by a stem of 4 bp. The polypeptide is tRNA-splicing endonuclease (Thermococcus kodakarensis (strain ATCC BAA-918 / JCM 12380 / KOD1) (Pyrococcus kodakaraensis (strain KOD1))).